The following is a 561-amino-acid chain: Dihydroxy-acid dehydratase (561 aa).

C50 lines the [2Fe-2S] cluster pocket. D82 lines the Mg(2+) pocket. C123 contacts [2Fe-2S] cluster. Mg(2+) is bound by residues D124 and K125. K125 is subject to N6-carboxylysine. Position 195 (C195) interacts with [2Fe-2S] cluster. E447 provides a ligand contact to Mg(2+). S473 functions as the Proton acceptor in the catalytic mechanism.

Belongs to the IlvD/Edd family. As to quaternary structure, homodimer. [2Fe-2S] cluster is required as a cofactor. The cofactor is Mg(2+).

The enzyme catalyses (2R)-2,3-dihydroxy-3-methylbutanoate = 3-methyl-2-oxobutanoate + H2O. The catalysed reaction is (2R,3R)-2,3-dihydroxy-3-methylpentanoate = (S)-3-methyl-2-oxopentanoate + H2O. Its pathway is amino-acid biosynthesis; L-isoleucine biosynthesis; L-isoleucine from 2-oxobutanoate: step 3/4. It participates in amino-acid biosynthesis; L-valine biosynthesis; L-valine from pyruvate: step 3/4. In terms of biological role, functions in the biosynthesis of branched-chain amino acids. Catalyzes the dehydration of (2R,3R)-2,3-dihydroxy-3-methylpentanoate (2,3-dihydroxy-3-methylvalerate) into 2-oxo-3-methylpentanoate (2-oxo-3-methylvalerate) and of (2R)-2,3-dihydroxy-3-methylbutanoate (2,3-dihydroxyisovalerate) into 2-oxo-3-methylbutanoate (2-oxoisovalerate), the penultimate precursor to L-isoleucine and L-valine, respectively. This is Dihydroxy-acid dehydratase from Crocosphaera subtropica (strain ATCC 51142 / BH68) (Cyanothece sp. (strain ATCC 51142)).